Consider the following 239-residue polypeptide: Large ribosomal subunit protein uL2 (239 aa).

The segment at 203 to 239 (PFGGKEHHPGKPTTTSRRAPPGRKVGHIAARRTGRRK) is disordered. Positions 222–239 (PPGRKVGHIAARRTGRRK) are enriched in basic residues.

It belongs to the universal ribosomal protein uL2 family. Part of the 50S ribosomal subunit. Forms a bridge to the 30S subunit in the 70S ribosome.

In terms of biological role, one of the primary rRNA binding proteins. Required for association of the 30S and 50S subunits to form the 70S ribosome, for tRNA binding and peptide bond formation. It has been suggested to have peptidyltransferase activity; this is somewhat controversial. Makes several contacts with the 16S rRNA in the 70S ribosome. This Pyrococcus abyssi (strain GE5 / Orsay) protein is Large ribosomal subunit protein uL2.